The following is a 967-amino-acid chain: Isoleucine--tRNA ligase 2 (967 aa).

Positions 58 to 68 (PYANGDIHIGH) match the 'HIGH' region motif. Residues 430 to 463 (EADPGRADVTEEAGATGEARKVGKAEEAEEAGPV) are disordered. Glu-598 contributes to the L-isoleucyl-5'-AMP binding site. A 'KMSKS' region motif is present at residues 639 to 643 (KMSKS). Lys-642 contributes to the ATP binding site. 4 residues coordinate Zn(2+): Cys-922, Cys-925, Cys-942, and Cys-945.

It belongs to the class-I aminoacyl-tRNA synthetase family. IleS type 1 subfamily. In terms of assembly, monomer. The cofactor is Zn(2+).

It is found in the cytoplasm. The enzyme catalyses tRNA(Ile) + L-isoleucine + ATP = L-isoleucyl-tRNA(Ile) + AMP + diphosphate. In terms of biological role, catalyzes the attachment of isoleucine to tRNA(Ile). As IleRS can inadvertently accommodate and process structurally similar amino acids such as valine, to avoid such errors it has two additional distinct tRNA(Ile)-dependent editing activities. One activity is designated as 'pretransfer' editing and involves the hydrolysis of activated Val-AMP. The other activity is designated 'posttransfer' editing and involves deacylation of mischarged Val-tRNA(Ile). The protein is Isoleucine--tRNA ligase 2 of Burkholderia pseudomallei (strain K96243).